The sequence spans 342 residues: MYNLKDMTLEEMEEFFVNLGESKFRAKQLYKWIYDKRVTDFDLMTDISKNLRAKLKEIAYISELKIIERRVSQIDDTVKYLFLLEDKNIIEGVAIKYKFGNTACVSTQVGCNMKCKFCASAIGGKVRDLKASEMVDQVMAIDSDYGKISNIVLMGSGEPFDNYDEVMKFIKIVNNPYGLKIGKRHITISTVGIVPKIYQFADEELQVNLSISLHAPNNELRNELMPINRAYPLEELMKACRYYIEKTNRRITFEYALIDGVNDKKEHAYQLVDLLKGMLCHVNLIPINYVKEIGFRKSNNEKVMMFKKIIENAGITCTVRRELGSDIEAACGQLRRKYLKEG.

Glu91 serves as the catalytic Proton acceptor. The region spanning 97 to 326 (YKFGNTACVS…CTVRRELGSD (230 aa)) is the Radical SAM core domain. An intrachain disulfide couples Cys104 to Cys331. Residues Cys111, Cys115, and Cys118 each contribute to the [4Fe-4S] cluster site. Residues 157–158 (GE), Ser189, 212–214 (SLH), and Asn288 each bind S-adenosyl-L-methionine. Cys331 serves as the catalytic S-methylcysteine intermediate.

It belongs to the radical SAM superfamily. RlmN family. [4Fe-4S] cluster serves as cofactor.

Its subcellular location is the cytoplasm. The catalysed reaction is adenosine(2503) in 23S rRNA + 2 reduced [2Fe-2S]-[ferredoxin] + 2 S-adenosyl-L-methionine = 2-methyladenosine(2503) in 23S rRNA + 5'-deoxyadenosine + L-methionine + 2 oxidized [2Fe-2S]-[ferredoxin] + S-adenosyl-L-homocysteine. The enzyme catalyses adenosine(37) in tRNA + 2 reduced [2Fe-2S]-[ferredoxin] + 2 S-adenosyl-L-methionine = 2-methyladenosine(37) in tRNA + 5'-deoxyadenosine + L-methionine + 2 oxidized [2Fe-2S]-[ferredoxin] + S-adenosyl-L-homocysteine. Specifically methylates position 2 of adenine 2503 in 23S rRNA and position 2 of adenine 37 in tRNAs. The sequence is that of Probable dual-specificity RNA methyltransferase RlmN from Caldanaerobacter subterraneus subsp. tengcongensis (strain DSM 15242 / JCM 11007 / NBRC 100824 / MB4) (Thermoanaerobacter tengcongensis).